The primary structure comprises 143 residues: Transcription antitermination protein NusB (143 aa).

It belongs to the NusB family.

Functionally, involved in transcription antitermination. Required for transcription of ribosomal RNA (rRNA) genes. Binds specifically to the boxA antiterminator sequence of the ribosomal RNA (rrn) operons. This chain is Transcription antitermination protein NusB, found in Methylacidiphilum infernorum (isolate V4) (Methylokorus infernorum (strain V4)).